Reading from the N-terminus, the 279-residue chain is uncharacterized protein (279 aa).

Disordered stretches follow at residues 50 to 109 and 249 to 279; these read YTYN…YNKN and SQSQ…SPKL. Positions 68–109 are enriched in low complexity; the sequence is NNNSNYNNNNNNNNNNNNNNNNNNNNNNNKNNNNNNYNYNKN.

This is an uncharacterized protein from Dictyostelium discoideum (Social amoeba).